The chain runs to 547 residues: Chaperonin GroEL (547 aa).

ATP is bound by residues Thr-30–Pro-33, Lys-51, Asp-87–Thr-91, Gly-415, Asn-479–Ala-481, and Asp-495. Positions Pro-525–Met-547 are disordered. Residues Ala-532–Met-547 show a composition bias toward gly residues.

It belongs to the chaperonin (HSP60) family. Forms a cylinder of 14 subunits composed of two heptameric rings stacked back-to-back. Interacts with the co-chaperonin GroES.

It is found in the cytoplasm. It catalyses the reaction ATP + H2O + a folded polypeptide = ADP + phosphate + an unfolded polypeptide.. In terms of biological role, together with its co-chaperonin GroES, plays an essential role in assisting protein folding. The GroEL-GroES system forms a nano-cage that allows encapsulation of the non-native substrate proteins and provides a physical environment optimized to promote and accelerate protein folding. The chain is Chaperonin GroEL from Nitrosomonas europaea (strain ATCC 19718 / CIP 103999 / KCTC 2705 / NBRC 14298).